A 1158-amino-acid chain; its full sequence is ATP-dependent helicase/deoxyribonuclease subunit B (1158 aa).

In terms of domain architecture, UvrD-like helicase ATP-binding spans 1–275 (MTLHAYLGRA…QYFNQLYRFN (275 aa)). Residue 8 to 15 (GRAGTGKS) coordinates ATP. One can recognise a UvrD-like helicase C-terminal domain in the interval 269–583 (NQLYRFNNQD…SIGTMDLAKV (315 aa)). [4Fe-4S] cluster contacts are provided by cysteine 784, cysteine 1112, cysteine 1115, and cysteine 1121.

This sequence belongs to the helicase family. AddB/RexB type 1 subfamily. In terms of assembly, heterodimer of AddA and AddB. Mg(2+) serves as cofactor. [4Fe-4S] cluster is required as a cofactor.

The heterodimer acts as both an ATP-dependent DNA helicase and an ATP-dependent, dual-direction single-stranded exonuclease. Recognizes the chi site generating a DNA molecule suitable for the initiation of homologous recombination. The AddB subunit has 5' -&gt; 3' nuclease activity but not helicase activity. The sequence is that of ATP-dependent helicase/deoxyribonuclease subunit B from Staphylococcus aureus (strain MRSA252).